Reading from the N-terminus, the 536-residue chain is Bifunctional purine biosynthesis protein PurH (536 aa).

One can recognise an MGS-like domain in the interval 8-158 (IPAPDEVRIK…KNHAYVTVVT (151 aa)).

The protein belongs to the PurH family.

It carries out the reaction (6R)-10-formyltetrahydrofolate + 5-amino-1-(5-phospho-beta-D-ribosyl)imidazole-4-carboxamide = 5-formamido-1-(5-phospho-D-ribosyl)imidazole-4-carboxamide + (6S)-5,6,7,8-tetrahydrofolate. It catalyses the reaction IMP + H2O = 5-formamido-1-(5-phospho-D-ribosyl)imidazole-4-carboxamide. The protein operates within purine metabolism; IMP biosynthesis via de novo pathway; 5-formamido-1-(5-phospho-D-ribosyl)imidazole-4-carboxamide from 5-amino-1-(5-phospho-D-ribosyl)imidazole-4-carboxamide (10-formyl THF route): step 1/1. It participates in purine metabolism; IMP biosynthesis via de novo pathway; IMP from 5-formamido-1-(5-phospho-D-ribosyl)imidazole-4-carboxamide: step 1/1. The protein is Bifunctional purine biosynthesis protein PurH of Sinorhizobium medicae (strain WSM419) (Ensifer medicae).